We begin with the raw amino-acid sequence, 304 residues long: ATP phosphoribosyltransferase (304 aa).

The protein belongs to the ATP phosphoribosyltransferase family. Long subfamily. It depends on Mg(2+) as a cofactor.

It is found in the cytoplasm. It catalyses the reaction 1-(5-phospho-beta-D-ribosyl)-ATP + diphosphate = 5-phospho-alpha-D-ribose 1-diphosphate + ATP. The protein operates within amino-acid biosynthesis; L-histidine biosynthesis; L-histidine from 5-phospho-alpha-D-ribose 1-diphosphate: step 1/9. With respect to regulation, feedback inhibited by histidine. Catalyzes the condensation of ATP and 5-phosphoribose 1-diphosphate to form N'-(5'-phosphoribosyl)-ATP (PR-ATP). Has a crucial role in the pathway because the rate of histidine biosynthesis seems to be controlled primarily by regulation of HisG enzymatic activity. In Xanthomonas euvesicatoria pv. vesicatoria (strain 85-10) (Xanthomonas campestris pv. vesicatoria), this protein is ATP phosphoribosyltransferase.